A 490-amino-acid polypeptide reads, in one-letter code: Ketol-acid reductoisomerase (NADP(+)) (490 aa).

The KARI N-terminal Rossmann domain occupies 18 to 208; sequence AKCRFMDSSE…GGHKAGVLMS (191 aa). NADP(+) contacts are provided by residues 45 to 48, arginine 68, arginine 76, serine 78, and 108 to 110; these read CGAQ and DKQ. Histidine 132 is an active-site residue. An NADP(+)-binding site is contributed by glycine 158. KARI C-terminal knotted domains are found at residues 209-344 and 345-486; these read SFIA…KTPA and GDVE…MADM. The Mg(2+) site is built by aspartate 217, glutamate 221, glutamate 389, and glutamate 393. Serine 414 provides a ligand contact to substrate.

The protein belongs to the ketol-acid reductoisomerase family. Mg(2+) serves as cofactor.

It catalyses the reaction (2R)-2,3-dihydroxy-3-methylbutanoate + NADP(+) = (2S)-2-acetolactate + NADPH + H(+). The enzyme catalyses (2R,3R)-2,3-dihydroxy-3-methylpentanoate + NADP(+) = (S)-2-ethyl-2-hydroxy-3-oxobutanoate + NADPH + H(+). Its pathway is amino-acid biosynthesis; L-isoleucine biosynthesis; L-isoleucine from 2-oxobutanoate: step 2/4. It functions in the pathway amino-acid biosynthesis; L-valine biosynthesis; L-valine from pyruvate: step 2/4. In terms of biological role, involved in the biosynthesis of branched-chain amino acids (BCAA). Catalyzes an alkyl-migration followed by a ketol-acid reduction of (S)-2-acetolactate (S2AL) to yield (R)-2,3-dihydroxy-isovalerate. In the isomerase reaction, S2AL is rearranged via a Mg-dependent methyl migration to produce 3-hydroxy-3-methyl-2-ketobutyrate (HMKB). In the reductase reaction, this 2-ketoacid undergoes a metal-dependent reduction by NADPH to yield (R)-2,3-dihydroxy-isovalerate. The polypeptide is Ketol-acid reductoisomerase (NADP(+)) (Marinomonas sp. (strain MWYL1)).